The following is a 173-amino-acid chain: Ribosome maturation factor RimM (173 aa).

One can recognise a PRC barrel domain in the interval 98-170; the sequence is EDEYYWCDLL…RMTVSLPEGL (73 aa).

Belongs to the RimM family. Binds ribosomal protein uS19.

It is found in the cytoplasm. Functionally, an accessory protein needed during the final step in the assembly of 30S ribosomal subunit, possibly for assembly of the head region. Essential for efficient processing of 16S rRNA. May be needed both before and after RbfA during the maturation of 16S rRNA. It has affinity for free ribosomal 30S subunits but not for 70S ribosomes. The sequence is that of Ribosome maturation factor RimM from Geotalea uraniireducens (strain Rf4) (Geobacter uraniireducens).